A 278-amino-acid polypeptide reads, in one-letter code: Tryptophan 2,3-dioxygenase (278 aa).

Substrate is bound by residues 47 to 51 (FIVQH), Tyr109, and Arg113. His236 lines the heme pocket. A substrate-binding site is contributed by Thr250.

Belongs to the tryptophan 2,3-dioxygenase family. As to quaternary structure, homotetramer. It depends on heme as a cofactor.

It carries out the reaction L-tryptophan + O2 = N-formyl-L-kynurenine. The protein operates within amino-acid degradation; L-tryptophan degradation via kynurenine pathway; L-kynurenine from L-tryptophan: step 1/2. Functionally, heme-dependent dioxygenase that catalyzes the oxidative cleavage of the L-tryptophan (L-Trp) pyrrole ring and converts L-tryptophan to N-formyl-L-kynurenine. Catalyzes the oxidative cleavage of the indole moiety. This chain is Tryptophan 2,3-dioxygenase, found in Ralstonia pickettii (strain 12J).